We begin with the raw amino-acid sequence, 183 residues long: Oligoribonuclease (183 aa).

The 164-residue stretch at 9–172 (LIWIDLEMTG…DDIRESIEEL (164 aa)) folds into the Exonuclease domain. The active site involves tyrosine 130.

It belongs to the oligoribonuclease family.

The protein localises to the cytoplasm. In terms of biological role, 3'-to-5' exoribonuclease specific for small oligoribonucleotides. This chain is Oligoribonuclease, found in Haemophilus ducreyi (strain 35000HP / ATCC 700724).